The sequence spans 34 residues: Non-cysteinic peptide Bs 10 (34 aa).

The disordered stretch occupies residues 1–34 (VTMGYIKDGDGKKIAKKKNKNGRKHVEIDLNKVG). Residues 14–23 (IAKKKNKNGR) show a composition bias toward basic residues. A compositionally biased stretch (basic and acidic residues) spans 24–34 (KHVEIDLNKVG).

Expressed by the venom gland.

The protein localises to the secreted. The polypeptide is Non-cysteinic peptide Bs 10 (Hottentotta tamulus sindicus (Scorpion)).